The sequence spans 1060 residues: MPRDESINKVLIIGSGPIQIGQAAEFDYSGSQACKSLREEGIETVLVNSNPATIQTDMEMADRVYVEPLTPEIVAKIIQKEKPDAVLPTMGGQTGLNVATGLAEMGALEGVRVIGSSIETIRNVEDRDLFDSFMKKLNEPVPAARAVSSVEEALEAVEEIGYPVIVRPAFTLGGTGGGVAHSRDELIEIATRGLEMSFINQVLIDQSVLGWKEFEYEVMRDRNDTCIIVLCNMENIDPMGIHTGESVVVAPAQTLSDEDNQRLRDAAIKIIRALKIEGGCNIQFAVHPETGEYKVIEVNPRVSRSSALASKATGYPIAKIAAKIAVGMTLDEIQNDITKETPASFEPTIDYVVTKIPRWPFDKFKGISREIGVQMKSTGEVMAIGRTLEESLNKAIRSLDIGADGFTETPYTRADLENPTDQRLFQVYTALRDGMSIEEIHGLTQIDPFFLQKISNIAEFESSITRESLEDPRILLKAKRMGFSDSRLASLTGMDESSIRALRLENNIKPVYKMVDTCAAEFEARTPYYYGCYDLEDEVEVSDRRKVLIIGSGPIRIGQGIEFDYCCVHAAMALTEDGYETIMVNNNPETVSTDYDISDKLYFEPLTLEDVLAIIEKEKPEGVVVQFGGQTSINLAVPLAEAGVRILGTPHESIDRVEDRERFTEVLNKLGIPQAPYGIAKSFEDARAVAERIGYPVLVRPSYVLGGRAMEIVYDDVELEEYMREAVRVSPEHPILVDKFLEDAIEVDVDALCDGTDVYIGGIMEHIEEAGVHSGDSACVIPPQSIPEDIIDTIKEYTRKLALELEVVGLINIQYAVKPDSDPSVYILEANPRASRTVPFVSKATGVPLAKMAARLMMGAKLRDLGLTEEKDIEHVAVKESVFPFIKLPGADSVLGPEMKSTGEAMGIDENFGIAYYKSQLSASMDLLNEGKVFISVRDQDKDKIADIVKKADELGFRIMATRGTARAVSDIADIEVVRKVSQGSPNIRDAILDGEVGLIINTPSGKQSADDGYLIRRMAVELGIPYVTTLAGARAALNAIEAVRMGKITVKSLDEYHGM.

The carboxyphosphate synthetic domain stretch occupies residues 1 to 400; sequence MPRDESINKV…SLNKAIRSLD (400 aa). ATP contacts are provided by Arg127, Arg167, Gly173, Gly174, Gln206, Val208, Glu213, Gly240, Ile241, His242, Gln283, and Glu297. Residues 131 to 326 enclose the ATP-grasp 1 domain; sequence DSFMKKLNEP…IAKIAAKIAV (196 aa). 3 residues coordinate Mg(2+): Gln283, Glu297, and Asn299. Residues Gln283, Glu297, and Asn299 each coordinate Mn(2+). The tract at residues 401–539 is oligomerization domain; sequence IGADGFTETP…YGCYDLEDEV (139 aa). The tract at residues 540-926 is carbamoyl phosphate synthetic domain; sequence EVSDRRKVLI…YKSQLSASMD (387 aa). The ATP-grasp 2 domain maps to 664 to 858; it reads TEVLNKLGIP…LAKMAARLMM (195 aa). 10 residues coordinate ATP: Arg700, Lys739, Leu741, Glu746, Gly771, Val772, His773, Ser774, Gln814, and Glu829. Mg(2+) contacts are provided by Gln814, Glu829, and Asn831. The Mn(2+) site is built by Gln814, Glu829, and Asn831. The MGS-like domain occupies 925-1060; that stretch reads MDLLNEGKVF…VKSLDEYHGM (136 aa). An allosteric domain region spans residues 927-1060; it reads LLNEGKVFIS…VKSLDEYHGM (134 aa).

This sequence belongs to the CarB family. Composed of two chains; the small (or glutamine) chain promotes the hydrolysis of glutamine to ammonia, which is used by the large (or ammonia) chain to synthesize carbamoyl phosphate. Tetramer of heterodimers (alpha,beta)4. The cofactor is Mg(2+). Requires Mn(2+) as cofactor.

The enzyme catalyses hydrogencarbonate + L-glutamine + 2 ATP + H2O = carbamoyl phosphate + L-glutamate + 2 ADP + phosphate + 2 H(+). The catalysed reaction is hydrogencarbonate + NH4(+) + 2 ATP = carbamoyl phosphate + 2 ADP + phosphate + 2 H(+). It functions in the pathway amino-acid biosynthesis; L-arginine biosynthesis; carbamoyl phosphate from bicarbonate: step 1/1. It participates in pyrimidine metabolism; UMP biosynthesis via de novo pathway; (S)-dihydroorotate from bicarbonate: step 1/3. Large subunit of the glutamine-dependent carbamoyl phosphate synthetase (CPSase). CPSase catalyzes the formation of carbamoyl phosphate from the ammonia moiety of glutamine, carbonate, and phosphate donated by ATP, constituting the first step of 2 biosynthetic pathways, one leading to arginine and/or urea and the other to pyrimidine nucleotides. The large subunit (synthetase) binds the substrates ammonia (free or transferred from glutamine from the small subunit), hydrogencarbonate and ATP and carries out an ATP-coupled ligase reaction, activating hydrogencarbonate by forming carboxy phosphate which reacts with ammonia to form carbamoyl phosphate. This Methanothermobacter thermautotrophicus (strain ATCC 29096 / DSM 1053 / JCM 10044 / NBRC 100330 / Delta H) (Methanobacterium thermoautotrophicum) protein is Carbamoyl phosphate synthase large chain.